The primary structure comprises 165 residues: Ribosome maturation factor RimM (165 aa).

The 72-residue stretch at 92–163 folds into the PRC barrel domain; it reads EARHYWADLE…RVVVDPPEGL (72 aa).

The protein belongs to the RimM family. As to quaternary structure, binds ribosomal protein uS19.

It localises to the cytoplasm. An accessory protein needed during the final step in the assembly of 30S ribosomal subunit, possibly for assembly of the head region. Essential for efficient processing of 16S rRNA. May be needed both before and after RbfA during the maturation of 16S rRNA. It has affinity for free ribosomal 30S subunits but not for 70S ribosomes. This Anaeromyxobacter sp. (strain Fw109-5) protein is Ribosome maturation factor RimM.